Reading from the N-terminus, the 375-residue chain is MTPSRTLVIDDAVPYAKELFSHLGNVISLPGKEINTEHLQNADALIVRSRTQVNSALLEHTNVSFVGSTVVGLDHVDQPYLKENAIEFYSAQGCNANSVSEYVITNLVNLAIEKKFTLSEKSLAIIGVGHVGKLVEKKARALGMTVLLNDPPRARQEMSDEFIDLDNALKSDIITVHTPLTKTGQDATFHLLSTDKLKKIQPHQILINAARGGIIDEQAWINTPTESNIIDCWENEPNINPDLYNQADIATPHIAGHALDAKIAGSEMVYRALCQHWQISPDDSWRRFLPPPPPPISLSLTGNHQEDIHNVLQQCYRPEEDDAAIRANNIVVTHKKYEYYRRHYPIHREWPQHRVIKTPDPTFNNLLYSLGFQLI.

Residue S49 participates in substrate binding. Positions 150 and 178 each coordinate NAD(+). The active site involves R211. D231 is a binding site for NAD(+). The active site involves E236. Catalysis depends on H253, which acts as the Proton donor. G256 is an NAD(+) binding site.

This sequence belongs to the D-isomer specific 2-hydroxyacid dehydrogenase family. PdxB subfamily. In terms of assembly, homodimer.

The protein resides in the cytoplasm. It carries out the reaction 4-phospho-D-erythronate + NAD(+) = (R)-3-hydroxy-2-oxo-4-phosphooxybutanoate + NADH + H(+). It participates in cofactor biosynthesis; pyridoxine 5'-phosphate biosynthesis; pyridoxine 5'-phosphate from D-erythrose 4-phosphate: step 2/5. Functionally, catalyzes the oxidation of erythronate-4-phosphate to 3-hydroxy-2-oxo-4-phosphonooxybutanoate. This Hydrogenovibrio crunogenus (strain DSM 25203 / XCL-2) (Thiomicrospira crunogena) protein is Erythronate-4-phosphate dehydrogenase.